The following is a 177-amino-acid chain: Small ribosomal subunit protein bS21m (177 aa).

The N-terminal 17 residues, 1–17, are a transit peptide targeting the mitochondrion; sequence MLKSTLRLSRISLRRGF.

Belongs to the bacterial ribosomal protein bS21 family. As to quaternary structure, component of the mitochondrial small ribosomal subunit (mt-SSU). Mature yeast 74S mitochondrial ribosomes consist of a small (37S) and a large (54S) subunit. The 37S small subunit contains a 15S ribosomal RNA (15S mt-rRNA) and 34 different proteins. The 54S large subunit contains a 21S rRNA (21S mt-rRNA) and 46 different proteins.

Its subcellular location is the mitochondrion. Functionally, component of the mitochondrial ribosome (mitoribosome), a dedicated translation machinery responsible for the synthesis of mitochondrial genome-encoded proteins, including at least some of the essential transmembrane subunits of the mitochondrial respiratory chain. The mitoribosomes are attached to the mitochondrial inner membrane and translation products are cotranslationally integrated into the membrane. This chain is Small ribosomal subunit protein bS21m (MRP21), found in Saccharomyces cerevisiae (strain ATCC 204508 / S288c) (Baker's yeast).